We begin with the raw amino-acid sequence, 208 residues long: Large ribosomal subunit protein uL3 (208 aa).

A disordered region spans residues 116 to 148 (GFQGVIKRHGQSRGPMAHGSRYHRRPGSMGPVA).

Belongs to the universal ribosomal protein uL3 family. Part of the 50S ribosomal subunit. Forms a cluster with proteins L14 and L19.

Its function is as follows. One of the primary rRNA binding proteins, it binds directly near the 3'-end of the 23S rRNA, where it nucleates assembly of the 50S subunit. The sequence is that of Large ribosomal subunit protein uL3 from Streptococcus agalactiae serotype Ia (strain ATCC 27591 / A909 / CDC SS700).